An 800-amino-acid polypeptide reads, in one-letter code: Nuclear poly(A) polymerase 2 (800 aa).

Residues 103–105, 115–118, D171, K232, Y241, and 250–251 contribute to the ATP site; these read FGS, ADID, and GV. 3 residues coordinate Mg(2+): D116, D118, and D171. 2 consecutive short sequence motifs (nuclear localization signal) follow at residues 487–494 and 533–540; these read RRRQLPSF and KRKNDDEI. Residues 497–576 are disordered; the sequence is PNGYKRSRQS…SGITTSGTPQ (80 aa). Positions 527 to 538 are enriched in basic and acidic residues; it reads SVERYAKRKNDD. The span at 564 to 575 shows a compositional bias: polar residues; the sequence is PDSSGITTSGTP.

Belongs to the poly(A) polymerase family. Monomer. Forms a complex with cleavage and polyadenylation specificity factor (CPSF) subunits CPSF100, CPSF30, FIPS5 and PABN2. Mg(2+) is required as a cofactor. The cofactor is Mn(2+). As to expression, mostly expressed in flowers (highly in the style, receptacle and pedicel, but weakly in the vasculature of sepals) and hypocotyls, and, to a lower extent, in roots and stems. Barely detected in leaves (petioles and vascular system).

It is found in the nucleus. Its subcellular location is the cytoplasm. The catalysed reaction is RNA(n) + ATP = RNA(n)-3'-adenine ribonucleotide + diphosphate. Its function is as follows. Essential protein. Polymerase that creates the 3'-poly(A) tail of mRNA's. Also required for the endoribonucleolytic cleavage reaction at some polyadenylation sites. May acquire specificity through interaction with a cleavage and polyadenylation specificity factor (CPSF) at its C-terminus. Mediates the polyadenylation of RNAs that are associated with polynucleotide phosphorylase (e.g. PNP1). This chain is Nuclear poly(A) polymerase 2, found in Arabidopsis thaliana (Mouse-ear cress).